The following is a 485-amino-acid chain: Glutamyl-tRNA(Gln) amidotransferase subunit A (485 aa).

Active-site charge relay system residues include Lys-79 and Ser-154. The active-site Acyl-ester intermediate is Ser-178.

Belongs to the amidase family. GatA subfamily. In terms of assembly, heterotrimer of A, B and C subunits.

It catalyses the reaction L-glutamyl-tRNA(Gln) + L-glutamine + ATP + H2O = L-glutaminyl-tRNA(Gln) + L-glutamate + ADP + phosphate + H(+). In terms of biological role, allows the formation of correctly charged Gln-tRNA(Gln) through the transamidation of misacylated Glu-tRNA(Gln) in organisms which lack glutaminyl-tRNA synthetase. The reaction takes place in the presence of glutamine and ATP through an activated gamma-phospho-Glu-tRNA(Gln). The sequence is that of Glutamyl-tRNA(Gln) amidotransferase subunit A from Staphylococcus aureus (strain MW2).